The primary structure comprises 497 residues: 4,4'-diaponeurosporene oxygenase (497 aa).

7 to 19 (VIGGGLGGISAAI) is an FAD binding site.

Belongs to the carotenoid/retinoid oxidoreductase family. CrtP subfamily. Requires FAD as cofactor.

It carries out the reaction all-trans-4,4'-diaponeurosporene + 2 AH2 + 2 O2 = 4,4'-diaponeurosporenal + 2 A + 3 H2O. Its pathway is carotenoid biosynthesis; staphyloxanthin biosynthesis; staphyloxanthin from farnesyl diphosphate: step 3/5. Involved in the biosynthesis of the yellow-orange carotenoid staphyloxanthin, which plays a role in the virulence via its protective function against oxidative stress. Catalyzes the oxidation of the terminal methyl side group of 4,4'-diaponeurosporene to form 4,4'-diaponeurosporen-4-al. In Staphylococcus aureus (strain MRSA252), this protein is 4,4'-diaponeurosporene oxygenase.